The chain runs to 195 residues: ATP-dependent Clp protease proteolytic subunit (195 aa).

Residue Ser98 is the Nucleophile of the active site. The active site involves His123.

It belongs to the peptidase S14 family. In terms of assembly, fourteen ClpP subunits assemble into 2 heptameric rings which stack back to back to give a disk-like structure with a central cavity, resembling the structure of eukaryotic proteasomes.

It is found in the cytoplasm. The catalysed reaction is Hydrolysis of proteins to small peptides in the presence of ATP and magnesium. alpha-casein is the usual test substrate. In the absence of ATP, only oligopeptides shorter than five residues are hydrolyzed (such as succinyl-Leu-Tyr-|-NHMec, and Leu-Tyr-Leu-|-Tyr-Trp, in which cleavage of the -Tyr-|-Leu- and -Tyr-|-Trp bonds also occurs).. Its function is as follows. Cleaves peptides in various proteins in a process that requires ATP hydrolysis. Has a chymotrypsin-like activity. Plays a major role in the degradation of misfolded proteins. The sequence is that of ATP-dependent Clp protease proteolytic subunit from Helicobacter pylori (strain J99 / ATCC 700824) (Campylobacter pylori J99).